A 128-amino-acid chain; its full sequence is 3-aminoacrylate deaminase RutC (128 aa).

Belongs to the RutC family. In terms of assembly, homotrimer.

It catalyses the reaction (Z)-3-aminoacrylate + H2O + H(+) = 3-oxopropanoate + NH4(+). Its function is as follows. Involved in pyrimidine catabolism. Catalyzes the deamination of 3-aminoacrylate to malonic semialdehyde, a reaction that can also occur spontaneously. RutC may facilitate the reaction and modulate the metabolic fitness, rather than catalyzing essential functions. This Escherichia coli (strain SE11) protein is 3-aminoacrylate deaminase RutC.